Reading from the N-terminus, the 281-residue chain is Protein synthesis inhibitor I (281 aa).

The residue at position 2 (alanine 2) is an N-acetylalanine. Glutamate 175 is a catalytic residue.

Belongs to the ribosome-inactivating protein family. Type 1 RIP subfamily.

It localises to the cytoplasm. It carries out the reaction Endohydrolysis of the N-glycosidic bond at one specific adenosine on the 28S rRNA.. Inhibits the elongation phase of protein synthesis. It inactivates fungal ribosomes even more effectively than mammalian ribosomes and is thought to function as a constitutive antifungal agent in plants. The polypeptide is Protein synthesis inhibitor I (RIP30) (Hordeum vulgare (Barley)).